The chain runs to 255 residues: MLTKRIIACLDVKDGRVVKGTQFKNHKDMGDIIELARYYSQNGIDELVFYDIAASARKERISREWVSEVAKNINISFCVAGGIKSEEDAAELLANGADKISINSPALNDPSLITRLAKSFGVQCVVVGIDSFKDENGNLKVFQYTGDEKTSKHSGKSTLEWVKKVQDLGAGEIVLNMMNQDGVKNGYDLEQLEAVYKICKVPLIASGGAGKMEHFLEAFKLGIDGALAASVFHQKLIDIKELKIYLKNQGLSIRI.

Residues D11 and D130 contribute to the active site.

It belongs to the HisA/HisF family. Heterodimer of HisH and HisF.

The protein resides in the cytoplasm. It catalyses the reaction 5-[(5-phospho-1-deoxy-D-ribulos-1-ylimino)methylamino]-1-(5-phospho-beta-D-ribosyl)imidazole-4-carboxamide + L-glutamine = D-erythro-1-(imidazol-4-yl)glycerol 3-phosphate + 5-amino-1-(5-phospho-beta-D-ribosyl)imidazole-4-carboxamide + L-glutamate + H(+). It participates in amino-acid biosynthesis; L-histidine biosynthesis; L-histidine from 5-phospho-alpha-D-ribose 1-diphosphate: step 5/9. In terms of biological role, IGPS catalyzes the conversion of PRFAR and glutamine to IGP, AICAR and glutamate. The HisF subunit catalyzes the cyclization activity that produces IGP and AICAR from PRFAR using the ammonia provided by the HisH subunit. This is Imidazole glycerol phosphate synthase subunit HisF from Campylobacter jejuni (strain RM1221).